The chain runs to 216 residues: Transmembrane emp24 domain-containing protein eca (216 aa).

The N-terminal stretch at 1–20 (MRNQFICVALLLCALNSACG) is a signal peptide. Residues 21 to 183 (LYFHISETER…RHTSESTNSR (163 aa)) are Lumenal-facing. A GOLD domain is found at 30-126 (RKCFIEEVPD…QLRVHLDIQV (97 aa)). Residues 134–164 (ANVAQKEKLTELQLRIRQLLDQVDQITKEQN) are a coiled coil. A helical membrane pass occupies residues 184 to 203 (VLWWSLAQTVVLVCMGFWQM). At 204–216 (RHLKSFFEAKKLV) the chain is on the cytoplasmic side. A Prevents secretion from ER motif is present at residues 213–216 (KKLV).

The protein belongs to the EMP24/GP25L family.

It is found in the endoplasmic reticulum membrane. Eca and bai are essential, though not redundant, for dorsoventral patterning of the embryo. Specifically required during early embryogenesis for the activity of maternal tkv, while the zygotic tkv is not affected. Involved in Golgi organization. This chain is Transmembrane emp24 domain-containing protein eca, found in Drosophila willistoni (Fruit fly).